Consider the following 274-residue polypeptide: Mitochondrial outer membrane protein porin 4 (274 aa).

Glycine 2 is subject to N-acetylglycine. Phosphoserine is present on serine 76.

Belongs to the eukaryotic mitochondrial porin (TC 1.B.8.1) family. In terms of tissue distribution, widely expressed.

The protein localises to the cell membrane. Its subcellular location is the mitochondrion outer membrane. Its function is as follows. Forms a channel through the mitochondrial outer membrane that allows diffusion of small hydrophilic molecules. The channel adopts an open conformation at low or zero membrane potential and a closed conformation at potentials above 30-40 mV. The open state has a weak anion selectivity whereas the closed state is cation-selective. Involved in plant growth and development at the vegetative and reproductive stages. Is important for leaf and pollen development and mitochondrial membrane potential steady state. May be involved in disease resistance. The polypeptide is Mitochondrial outer membrane protein porin 4 (VDAC4) (Arabidopsis thaliana (Mouse-ear cress)).